Reading from the N-terminus, the 156-residue chain is Aspercryptin biosynthesis cluster protein B (156 aa).

A signal peptide spans Met-1–Pro-39.

This sequence belongs to the YciI family.

Its pathway is secondary metabolite biosynthesis. Functionally, part of the gene cluster that mediates the biosynthesis of aspercryptins, linear lipopeptides built from six amino acids including 2 highly unusual and nonproteogenic amino acids, 2-amino-octanoic acid (2aoa) and 2-amino-dodecanol (2adol). The core structure of aspercryptins is as follows: Ser/Ala-Thr-Ile/Val-2aoa-Aasn-2adol. The first step of aspercryptin biosynthesis is the generation of the fatty acid precursors, octanoic and dodecanoic acids, by the FAS subunits atnF and atnM. The fatty acid precursors are likely transformed into the corresponding alpha-amino fatty acids in three steps. First, they are hydroxylated by the cytochrome P450 monooxygenase atnE, then oxidized to the corresponding alpha-keto acids by the NAD(P)-dependent oxidoreductase atnD, and finally converted to the alpha-amino fatty acids by the PLP-dependent aminotransferases atnH or atnJ. the alpha-amino fatty acids, 2-amino-octanoic and 2-amino-dodecanoic acids, are recognized, activated, and covalently tethered to the NRPS atnA by its fourth and sixth adenylation domains. The second module of atnA is the Thr module and contains an epimerase (E) domain responsible for the epimerization of Thr to D-allo-Thr. Additionally, despite atnA having only one epimerase domain, the first amino acid of aspercryptin A1 is D-Ser, suggesting that serine is either loaded directly as D-Ser on the first module or that the epimerase domain in the threonine module epimerizes both L-Ser and L-Thr. After condensation of the hexapeptide of aspercryptin, the C-terminal reductase (TE) domain might be involved in the reductive release and production of the aldehyde hexapeptide. Further reduction would generate aspercryptins. The variety of aspercryptins produced reflects the flexibility of the atnA NRPS, allowing incorporation of alanine instead of serine, valine for isoleucine, and a C10 fatty amino alcohol instead of the C12 version. AtnB seems to be involved in the selectivity for Ile versus Val by the third module. Moreover, type B, C and D aspercryptins have an additional N-terminal cichorine, acetyl and propionyl group respectively. The polypeptide is Aspercryptin biosynthesis cluster protein B (Emericella nidulans (strain FGSC A4 / ATCC 38163 / CBS 112.46 / NRRL 194 / M139) (Aspergillus nidulans)).